A 40-amino-acid chain; its full sequence is Protein P4 (40 aa).

A helical transmembrane segment spans residues 10 to 29; it reads KYFAYGVAISAAGAILAEYV.

The protein resides in the virion membrane. May interact with the viral DNA. The chain is Protein P4 (IV) from Pseudoalteromonas phage PM2 (Bacteriophage PM2).